Reading from the N-terminus, the 273-residue chain is NADPH-dependent 7-cyano-7-deazaguanine reductase (273 aa).

81–83 lines the substrate pocket; it reads VES. 83-84 lines the NADPH pocket; sequence SK. The active-site Thioimide intermediate is Cys179. Catalysis depends on Asp186, which acts as the Proton donor. A substrate-binding site is contributed by 218 to 219; sequence AE. Residue 247 to 248 coordinates NADPH; sequence RG.

It belongs to the GTP cyclohydrolase I family. QueF type 2 subfamily. In terms of assembly, homodimer.

Its subcellular location is the cytoplasm. The enzyme catalyses 7-aminomethyl-7-carbaguanine + 2 NADP(+) = 7-cyano-7-deazaguanine + 2 NADPH + 3 H(+). It participates in tRNA modification; tRNA-queuosine biosynthesis. In terms of biological role, catalyzes the NADPH-dependent reduction of 7-cyano-7-deazaguanine (preQ0) to 7-aminomethyl-7-deazaguanine (preQ1). In Rickettsia massiliae (strain Mtu5), this protein is NADPH-dependent 7-cyano-7-deazaguanine reductase.